A 234-amino-acid polypeptide reads, in one-letter code: Mediator of RNA polymerase II transcription subunit 4 (234 aa).

A coiled-coil region spans residues 71–124 (HQEAYRRLVEKKNEVAGLEMRVRGLVKRLEEGRKELEGMIDQGERSLEDIEKSE). Residues 188 to 234 (GVVGEEQKAPQKVEERREHVEHEESDRRYDPNAVFQLDLNSDESDED) are disordered. Over residues 189 to 217 (VVGEEQKAPQKVEERREHVEHEESDRRYD) the composition is skewed to basic and acidic residues.

The protein belongs to the Mediator complex subunit 4 family. In terms of assembly, component of the Mediator complex.

The protein resides in the nucleus. Component of the Mediator complex, a coactivator involved in the regulated transcription of nearly all RNA polymerase II-dependent genes. Mediator functions as a bridge to convey information from gene-specific regulatory proteins to the basal RNA polymerase II transcription machinery. Mediator is recruited to promoters by direct interactions with regulatory proteins and serves as a scaffold for the assembly of a functional preinitiation complex with RNA polymerase II and the general transcription factors. The sequence is that of Mediator of RNA polymerase II transcription subunit 4 (MED4) from Cryptococcus neoformans var. neoformans serotype D (strain JEC21 / ATCC MYA-565) (Filobasidiella neoformans).